The chain runs to 124 residues: MQGLEYTLEPEQAKKCKTHQLVDLAKIDLNSWSQENVRPKTLLGRTSKKRLTSQFWYEFTKKQKLKNALYYFVIYDITDNSILPVETLNQKNPLSTSFPFPFGRPLRGINFSGSCLHCLLRVLK.

It is found in the plastid. It localises to the chloroplast. This is an uncharacterized protein from Chlamydomonas reinhardtii (Chlamydomonas smithii).